The sequence spans 224 residues: Peptidyl-prolyl cis-trans isomerase FKBP3 (224 aa).

Ala-2 is modified (N-acetylalanine). Residue Ser-36 is modified to Phosphoserine. Basic and acidic residues predominate over residues 89 to 102; the sequence is KLNEDKPKETKSEE. A disordered region spans residues 89–113; it reads KLNEDKPKETKSEETLDEGPPKYTK. Lys-99 carries the post-translational modification N6-acetyllysine. The PPIase FKBP-type domain occupies 128 to 224; it reads GDVVHCWYTG…IFEVELVDID (97 aa). Ser-152 is subject to Phosphoserine. Lys-170 is modified (N6-acetyllysine).

Belongs to the FKBP-type PPIase family.

It is found in the nucleus. The enzyme catalyses [protein]-peptidylproline (omega=180) = [protein]-peptidylproline (omega=0). Its activity is regulated as follows. Inhibited preferentially by rapamycin over FK506. Functionally, FK506- and rapamycin-binding proteins (FKBPs) constitute a family of receptors for the two immunosuppressants which inhibit T-cell proliferation by arresting two dinstinct cytoplasmic signal transmission pathways. PPIases accelerate the folding of proteins. The polypeptide is Peptidyl-prolyl cis-trans isomerase FKBP3 (FKBP3) (Bos taurus (Bovine)).